A 516-amino-acid polypeptide reads, in one-letter code: Probable 2-methylcitrate dehydratase (516 aa).

Belongs to the PrpD family.

It carries out the reaction (2S,3S)-2-methylcitrate = 2-methyl-cis-aconitate + H2O. It functions in the pathway organic acid metabolism; propanoate degradation. In terms of biological role, catalyzes the stereospecific dehydration of (2S,3S)-2-methylcitrate (2-MC) to yield the cis isomer of 2-methyl-aconitate. In Saccharomyces cerevisiae (strain ATCC 204508 / S288c) (Baker's yeast), this protein is Probable 2-methylcitrate dehydratase (PDH1).